The primary structure comprises 1289 residues: Trafficking protein particle complex II-specific subunit 120 (1289 aa).

Over residues 354–365 the composition is skewed to polar residues; it reads STGISPVDSNSK. Residues 354–374 are disordered; that stretch reads STGISPVDSNSKATASTTASS. 2 positions are modified to phosphoserine: Ser379 and Ser387.

This sequence belongs to the TRS120 family. Part of the multisubunit TRAPP (transport protein particle) II complex composed of BET3, BET5, TRS20, TRS23, TRS31, TRS33, TRS65, TRS120 and TRS130. Interacts directly with TRS65.

It localises to the golgi apparatus. The protein resides in the cis-Golgi network. Its function is as follows. Specific subunit of the TRAPP II complex, a highly conserved vesicle tethering complex that functions in the late Golgi as a guanine nucleotide exchanger (GEF) for the Golgi YPT1 GTPase. TRS120 plays a role in the YPT GEF activity of TRAPP II in concert with the two other TRAPP II-specific subunits TRS65 and TRS130. In Saccharomyces cerevisiae (strain ATCC 204508 / S288c) (Baker's yeast), this protein is Trafficking protein particle complex II-specific subunit 120 (TRS120).